A 483-amino-acid polypeptide reads, in one-letter code: MKNVQTLKNYIGGQWIESTSKQVEDVPNPATGEIIARVPLSTKEDLDRAVATAKEAFKTWRKVAVPRRARILFRYQQLLIENWEGLAKLVTLENGKSYKEAYGEVQRGIECVEFAAGAPTLMMGEQLPDIATGVESGMYRYPIGVIAGITPFNFPMMVPCWMFPLAIACGNTFVLKPSERTPLLANRIAELFKEAGLPDGVLNIVHGAHDVVNGILDNEDVKAVSFVGSQPVAEYIYKTAAANGKRVQALAGAKNHSIVLKDADLSSTVKEITSAAFGSAGERCMAAAVVVVEEDVADELVNRLLQEANAITIGNGLEEGVFLGPVIREGHKERTLGYIQSGVEQGATLIRDGREDDIANSQGYFVGPTIFDNVTQEMKIWQDEIFAPVLSIVRVKDLMEAIHVANASPFANGACLYTNSAKAIREFREEIDAGMLGVNLGVPAPMAFFPFSGYKKSFYGDLHANGKDGVEFYTRKKMLTARY.

The NAD(+) site is built by Phe152, Lys176, Glu179, Arg180, and Ser229. Cys284 (nucleophile) is an active-site residue. Glu384 contacts NAD(+).

The protein belongs to the aldehyde dehydrogenase family. IolA subfamily. Homotetramer.

The enzyme catalyses 3-oxopropanoate + NAD(+) + CoA + H2O = hydrogencarbonate + acetyl-CoA + NADH + H(+). It carries out the reaction 2-methyl-3-oxopropanoate + NAD(+) + CoA + H2O = propanoyl-CoA + hydrogencarbonate + NADH + H(+). The protein operates within polyol metabolism; myo-inositol degradation into acetyl-CoA; acetyl-CoA from myo-inositol: step 7/7. Catalyzes the oxidation of malonate semialdehyde (MSA) and methylmalonate semialdehyde (MMSA) into acetyl-CoA and propanoyl-CoA, respectively. Is involved in a myo-inositol catabolic pathway. Bicarbonate, and not CO2, is the end-product of the enzymatic reaction. This Bacillus mycoides (strain KBAB4) (Bacillus weihenstephanensis) protein is Malonate-semialdehyde dehydrogenase 2.